A 283-amino-acid polypeptide reads, in one-letter code: Succinate dehydrogenase [ubiquinone] iron-sulfur subunit, mitochondrial (283 aa).

A 2Fe-2S ferredoxin-type domain is found at 66–145; the sequence is KKPTLQTYSI…PVKIYPLPHM (80 aa). 4 residues coordinate [2Fe-2S] cluster: Cys105, Cys110, Cys113, and Cys125. A 4Fe-4S ferredoxin-type domain is found at 186–216; the sequence is DRKKLDGMYECILCACCSTSCPSYWWNQDEY. Positions 196, 199, and 202 each coordinate [4Fe-4S] cluster. [3Fe-4S] cluster is bound at residue Cys206. Trp211 serves as a coordination point for a ubiquinone. [3Fe-4S] cluster contacts are provided by Cys253 and Cys259. Cys263 lines the [4Fe-4S] cluster pocket.

This sequence belongs to the succinate dehydrogenase/fumarate reductase iron-sulfur protein family. Component of complex II composed of four subunits: a flavoprotein (FP), an iron-sulfur protein (IP), and a cytochrome b composed of a large and a small subunit. [2Fe-2S] cluster is required as a cofactor. [3Fe-4S] cluster serves as cofactor. The cofactor is [4Fe-4S] cluster.

It is found in the mitochondrion inner membrane. It catalyses the reaction a quinone + succinate = fumarate + a quinol. It functions in the pathway carbohydrate metabolism; tricarboxylic acid cycle; fumarate from succinate (eukaryal route): step 1/1. Iron-sulfur protein (IP) subunit of succinate dehydrogenase (SDH) that is involved in complex II of the mitochondrial electron transport chain and is responsible for transferring electrons from succinate to ubiquinone (coenzyme Q). This Uromyces fabae (Rust fungus) protein is Succinate dehydrogenase [ubiquinone] iron-sulfur subunit, mitochondrial (SDH2).